An 86-amino-acid polypeptide reads, in one-letter code: uncharacterized protein (86 aa).

In terms of tissue distribution, retina-specific.

This is an uncharacterized protein from Homo sapiens (Human).